The sequence spans 376 residues: Actin-related protein T1 (376 aa).

This sequence belongs to the actin family.

It localises to the cytoplasm. Its subcellular location is the cytoskeleton. The protein localises to the nucleus. The protein resides in the cytoplasmic vesicle. It is found in the secretory vesicle. It localises to the acrosome. In terms of biological role, negatively regulates the Hedgehog (SHH) signaling. Binds to the promoter of the SHH signaling mediator, GLI1, and inhibits its expression. In Mus musculus (Mouse), this protein is Actin-related protein T1 (Actrt1).